The primary structure comprises 208 residues: 3,4-dihydroxy-2-butanone 4-phosphate synthase (208 aa).

Thr3 carries the post-translational modification Phosphothreonine. Position 27 (Glu27) interacts with Mg(2+). Residue Asp31 coordinates D-ribulose 5-phosphate. An S-glutathionyl cysteine; by GRX2 modification is found at Cys56. D-ribulose 5-phosphate is bound by residues Thr88 and 145-149 (RRGHT). His148 is a binding site for Mg(2+).

It belongs to the DHBP synthase family. In terms of assembly, homodimer. It depends on Mg(2+) as a cofactor. Requires Mn(2+) as cofactor. Post-translationally, S-glutathionylation of Cys-56 is reversible and dependent on the cytoplasmic isoform of glutaredoxin-2.

It is found in the cytoplasm. It localises to the nucleus. Its subcellular location is the mitochondrion intermembrane space. The catalysed reaction is D-ribulose 5-phosphate = (2S)-2-hydroxy-3-oxobutyl phosphate + formate + H(+). It participates in cofactor biosynthesis; riboflavin biosynthesis; 2-hydroxy-3-oxobutyl phosphate from D-ribulose 5-phosphate: step 1/1. In terms of biological role, catalyzes the conversion of D-ribulose 5-phosphate to formate and 3,4-dihydroxy-2-butanone 4-phosphate. Also has an unrelated function in expression of mitochondrial respiration. This is 3,4-dihydroxy-2-butanone 4-phosphate synthase (RIB3) from Saccharomyces cerevisiae (strain ATCC 204508 / S288c) (Baker's yeast).